Here is a 264-residue protein sequence, read N- to C-terminus: ATP synthase subunit a (264 aa).

5 helical membrane-spanning segments follow: residues 39 to 59 (LDTL…FYIV), 97 to 117 (VAPL…MDLV), 139 to 159 (TADP…VIFY), 205 to 225 (LFGN…LPWW), and 239 to 259 (LLVI…YISL).

It belongs to the ATPase A chain family. In terms of assembly, F-type ATPases have 2 components, CF(1) - the catalytic core - and CF(0) - the membrane proton channel. CF(1) has five subunits: alpha(3), beta(3), gamma(1), delta(1), epsilon(1). CF(0) has three main subunits: a(1), b(2) and c(9-12). The alpha and beta chains form an alternating ring which encloses part of the gamma chain. CF(1) is attached to CF(0) by a central stalk formed by the gamma and epsilon chains, while a peripheral stalk is formed by the delta and b chains.

It localises to the cell inner membrane. Its function is as follows. Key component of the proton channel; it plays a direct role in the translocation of protons across the membrane. This chain is ATP synthase subunit a, found in Coxiella burnetii (strain Dugway 5J108-111).